The sequence spans 631 residues: BTB/POZ domain-containing protein At1g67900 (631 aa).

Residues serine 28–alanine 93 enclose the BTB domain. Residues glycine 200–arginine 509 form the NPH3 domain. Residues glutamine 361 to serine 399 form a disordered region. The span at arginine 370–serine 382 shows a compositional bias: basic residues. Tyrosine 450 carries the post-translational modification Phosphotyrosine. A Phosphoserine modification is found at serine 567.

The protein belongs to the NPH3 family.

Its pathway is protein modification; protein ubiquitination. Its function is as follows. May act as a substrate-specific adapter of an E3 ubiquitin-protein ligase complex (CUL3-RBX1-BTB) which mediates the ubiquitination and subsequent proteasomal degradation of target proteins. The protein is BTB/POZ domain-containing protein At1g67900 of Arabidopsis thaliana (Mouse-ear cress).